A 333-amino-acid chain; its full sequence is Ribosomal RNA small subunit methyltransferase C (333 aa).

This sequence belongs to the methyltransferase superfamily. RsmC family. As to quaternary structure, monomer.

The protein resides in the cytoplasm. The catalysed reaction is guanosine(1207) in 16S rRNA + S-adenosyl-L-methionine = N(2)-methylguanosine(1207) in 16S rRNA + S-adenosyl-L-homocysteine + H(+). Its function is as follows. Specifically methylates the guanine in position 1207 of 16S rRNA in the 30S particle. The protein is Ribosomal RNA small subunit methyltransferase C of Actinobacillus succinogenes (strain ATCC 55618 / DSM 22257 / CCUG 43843 / 130Z).